Here is a 391-residue protein sequence, read N- to C-terminus: MSRFLICSFALVLLYPAGIDMYLVGLPRIAADLNASEAQLHIAFSVYLAGMAAAMLFAGKVADRSGRKPVAIPGAALFIIASVFCSLAETSALFLAGRFLQGLGAGCCYVVAFAILRDTLDDRRRAKVLSLLNGITCIIPVLAPVLGHLIMLNFPWQSLFWTMAIMGVAVLMLSLFILKETRPAAPAASDKPRENSESLLNRFFLSRVVITTLSVSVILTFVNTSPVLLMEIMGFERGEYATIMALTAGVSMTVSFSTPFALGIFKPRTLMITSQVLFLAAGITLAVSPSHAVSLFGITLICAGFSVGFGVAMSQALGPFSLRAGVASSTLGIAQVCGSSLWIWLAAVVGIGAWNMLIGILIACSIVSLLLIMFVAPGRPVAAHEEIHHHA.

12 helical membrane-spanning segments follow: residues 4–24 (FLIC…MYLV), 42–62 (IAFS…GKVA), 69–89 (PVAI…SLAE), 93–113 (LFLA…VVAF), 134–154 (GITC…MLNF), 158–178 (SLFW…LFIL), 203–222 (FFLS…LTFV), 245–265 (ALTA…LGIF), 269–289 (TLMI…AVSP), 293–313 (VSLF…GVAM), 331–351 (LGIA…VVGI), and 356–376 (MLIG…MFVA).

This sequence belongs to the major facilitator superfamily. DHA1 family. MdtL (TC 2.A.1.2.22) subfamily.

It localises to the cell inner membrane. Its function is as follows. Confers resistance to chloramphenicol. The polypeptide is Multidrug resistance protein MdtL (Escherichia coli O81 (strain ED1a)).